Reading from the N-terminus, the 506-residue chain is NAD(P)H-quinone oxidoreductase subunit 2 (506 aa).

13 consecutive transmembrane segments (helical) span residues alanine 14–alanine 34, tryptophan 42–tryptophan 62, leucine 79–tryptophan 99, proline 108–glycine 128, leucine 132–tyrosine 152, leucine 167–leucine 187, phenylalanine 206–valine 226, proline 240–isoleucine 260, leucine 276–glutamine 296, methionine 302–threonine 322, valine 330–phenylalanine 350, leucine 374–glycine 394, and leucine 409–isoleucine 429.

It belongs to the complex I subunit 2 family. In terms of assembly, NDH-1 can be composed of about 15 different subunits; different subcomplexes with different compositions have been identified which probably have different functions.

The protein localises to the cellular thylakoid membrane. The enzyme catalyses a plastoquinone + NADH + (n+1) H(+)(in) = a plastoquinol + NAD(+) + n H(+)(out). It carries out the reaction a plastoquinone + NADPH + (n+1) H(+)(in) = a plastoquinol + NADP(+) + n H(+)(out). Functionally, NDH-1 shuttles electrons from an unknown electron donor, via FMN and iron-sulfur (Fe-S) centers, to quinones in the respiratory and/or the photosynthetic chain. The immediate electron acceptor for the enzyme in this species is believed to be plastoquinone. Couples the redox reaction to proton translocation, and thus conserves the redox energy in a proton gradient. Cyanobacterial NDH-1 also plays a role in inorganic carbon-concentration. In Prochlorococcus marinus (strain MIT 9215), this protein is NAD(P)H-quinone oxidoreductase subunit 2.